The sequence spans 68 residues: Large ribosomal subunit protein uL29 (68 aa).

This sequence belongs to the universal ribosomal protein uL29 family.

In Nitrobacter hamburgensis (strain DSM 10229 / NCIMB 13809 / X14), this protein is Large ribosomal subunit protein uL29.